Consider the following 68-residue polypeptide: uncharacterized protein (68 aa).

This is an uncharacterized protein from Saccharomyces cerevisiae (strain ATCC 204508 / S288c) (Baker's yeast).